Reading from the N-terminus, the 153-residue chain is Histone H2B.6 (153 aa).

Composition is skewed to basic and acidic residues over residues 1–28 (MAPKAEKKPAAKKPAEEEPAAEKAEKAP) and 36–53 (EKRLPAGKGEKGSGEGKK). A disordered region spans residues 1–60 (MAPKAEKKPAAKKPAEEEPAAEKAEKAPAGKKPKAEKRLPAGKGEKGSGEGKKAGRKKGK). 2 positions are modified to N6-acetyllysine: K7 and K37. K149 participates in a covalent cross-link: Glycyl lysine isopeptide (Lys-Gly) (interchain with G-Cter in ubiquitin).

This sequence belongs to the histone H2B family. As to quaternary structure, the nucleosome is a histone octamer containing two molecules each of H2A, H2B, H3 and H4 assembled in one H3-H4 heterotetramer and two H2A-H2B heterodimers. The octamer wraps approximately 147 bp of DNA. Post-translationally, can be acetylated to form H2BK6ac and H2BK33ac. In terms of processing, monoubiquitinated by BRE1 to form H2BK143ub1 and deubiquitinated by UBP26. Required for heterochromatic histone H3 di- and trimethylation at H3K4me. May give a specific tag for epigenetic transcriptional activation.

The protein localises to the nucleus. Its subcellular location is the chromosome. Core component of nucleosome. Nucleosomes wrap and compact DNA into chromatin, limiting DNA accessibility to the cellular machineries which require DNA as a template. Histones thereby play a central role in transcription regulation, DNA repair, DNA replication and chromosomal stability. DNA accessibility is regulated via a complex set of post-translational modifications of histones, also called histone code, and nucleosome remodeling. This chain is Histone H2B.6 (H2B.6), found in Oryza sativa subsp. indica (Rice).